Reading from the N-terminus, the 488-residue chain is Thiamine transporter 2 (488 aa).

Topologically, residues methionine 1–proline 8 are cytoplasmic. Residues proline 9–phenylalanine 29 traverse the membrane as a helical segment. Residues arginine 30–asparagine 54 are Extracellular-facing. N-linked (GlcNAc...) asparagine glycosylation occurs at asparagine 46. A helical membrane pass occupies residues glutamate 55–threonine 75. Residues aspartate 76–proline 82 are Cytoplasmic-facing. Residues valine 83 to glycine 103 traverse the membrane as a helical segment. At valine 104–glutamate 111 the chain is on the extracellular side. Residues phenylalanine 112–valine 132 form a helical membrane-spanning segment. Residues serine 133 to arginine 145 are Cytoplasmic-facing. The chain crosses the membrane as a helical span at residues serine 146 to threonine 166. The Extracellular segment spans residues asparagine 167 to serine 172. The chain crosses the membrane as a helical span at residues leucine 173–methionine 193. Residues proline 194–serine 276 are Cytoplasmic-facing. Residues leucine 277–tryptophan 297 traverse the membrane as a helical segment. Over glutamate 298–asparagine 310 the chain is Extracellular. Residues glycine 311–leucine 331 form a helical membrane-spanning segment. Residues lysine 332 to tryptophan 335 lie on the Cytoplasmic side of the membrane. Residues aspartate 336–leucine 356 traverse the membrane as a helical segment. Over methionine 357–glycine 369 the chain is Extracellular. The N-linked (GlcNAc...) asparagine glycan is linked to asparagine 358. Residues tyrosine 370–valine 390 form a helical membrane-spanning segment. The Cytoplasmic segment spans residues asparagine 391–leucine 399. A helical membrane pass occupies residues valine 400–valine 420. Over aspartate 421–proline 428 the chain is Extracellular. A helical transmembrane segment spans residues valine 429–methionine 449. Over arginine 450–phenylalanine 488 the chain is Cytoplasmic. Positions threonine 469–phenylalanine 488 are disordered.

The protein belongs to the reduced folate carrier (RFC) transporter (TC 2.A.48) family. High expression in kidney, brain, lung and small intestine. Detected in pancreatic acinar cells (at protein level). Also expressed strongly in pancreatic islet cells.

The protein localises to the membrane. The enzyme catalyses thiamine(out) + H(+)(in) = thiamine(in) + H(+)(out). High-affinity transporter for the intake of thiamine. Unlike the human ortholog, lacks H(+)-dependent pyridoxine transport activity due to an absence of seven critical amino-acids required for pyridoxine transport. In Mus musculus (Mouse), this protein is Thiamine transporter 2 (Slc19a3).